The chain runs to 403 residues: Na(+)-translocating NADH-quinone reductase subunit B (403 aa).

Transmembrane regions (helical) follow at residues 56–76 (IMIM…YNIG), 114–134 (LAMF…TFIV), and 165–185 (LPAT…VVIA). Thr231 carries the post-translational modification FMN phosphoryl threonine. Transmembrane regions (helical) follow at residues 260 to 280 (GSVG…IIYM), 287 to 307 (IVLG…VIGS), 312 to 332 (MFAM…GMFF), 348 to 368 (WAYG…NPAF), and 371 to 391 (GMML…YFVA).

This sequence belongs to the NqrB/RnfD family. As to quaternary structure, composed of six subunits; NqrA, NqrB, NqrC, NqrD, NqrE and NqrF. The cofactor is FMN.

The protein localises to the cell inner membrane. The enzyme catalyses a ubiquinone + n Na(+)(in) + NADH + H(+) = a ubiquinol + n Na(+)(out) + NAD(+). NQR complex catalyzes the reduction of ubiquinone-1 to ubiquinol by two successive reactions, coupled with the transport of Na(+) ions from the cytoplasm to the periplasm. NqrA to NqrE are probably involved in the second step, the conversion of ubisemiquinone to ubiquinol. In Pseudoalteromonas atlantica (strain T6c / ATCC BAA-1087), this protein is Na(+)-translocating NADH-quinone reductase subunit B.